Reading from the N-terminus, the 119-residue chain is MPRVKRGVTARARHKKVLKLAKGYYGARSRTYRVAVQAVTKAGQYAYRDRRQKKRQFRQLWIARINAASRQNGLSYSRFINGLKKASIEIDRKILADIAVFDKVVFTTLVEKAKEALAK.

This sequence belongs to the bacterial ribosomal protein bL20 family.

Functionally, binds directly to 23S ribosomal RNA and is necessary for the in vitro assembly process of the 50S ribosomal subunit. It is not involved in the protein synthesizing functions of that subunit. In Shewanella woodyi (strain ATCC 51908 / MS32), this protein is Large ribosomal subunit protein bL20.